Here is a 314-residue protein sequence, read N- to C-terminus: UDP-N-acetylenolpyruvoylglucosamine reductase (314 aa).

Residues 25–191 (KIGGPADLFA…VRVGMELRWG (167 aa)) form the FAD-binding PCMH-type domain. Residue arginine 170 is part of the active site. Residue serine 220 is the Proton donor of the active site. Glutamate 291 is an active-site residue.

This sequence belongs to the MurB family. FAD serves as cofactor.

It localises to the cytoplasm. The enzyme catalyses UDP-N-acetyl-alpha-D-muramate + NADP(+) = UDP-N-acetyl-3-O-(1-carboxyvinyl)-alpha-D-glucosamine + NADPH + H(+). The protein operates within cell wall biogenesis; peptidoglycan biosynthesis. Its function is as follows. Cell wall formation. In Heliobacterium modesticaldum (strain ATCC 51547 / Ice1), this protein is UDP-N-acetylenolpyruvoylglucosamine reductase.